Reading from the N-terminus, the 595-residue chain is MFS-type efflux pump MFS2 (595 aa).

Residue Asn-62 is glycosylated (N-linked (GlcNAc...) asparagine). A run of 12 helical transmembrane segments spans residues 69-89, 106-126, 136-156, 166-186, 197-217, 225-245, 301-321, 336-356, 381-401, 409-429, 442-462, and 478-498; these read WSIT…SSAY, VITL…LIWA, LLFF…AGSP, FFAG…IADM, GIFA…GGFL, WVEG…SIFL, PIVL…YMLF, PGIG…AMVI, LPVA…FAWT, IVSI…FLSL, ASVL…FPLF, and IPAF…IYGA.

This sequence belongs to the major facilitator superfamily. DHA1 family. Polyamines/proton antiporter (TC 2.A.1.2.16) subfamily.

It localises to the cell membrane. MFS-type efflux pump involved in the modulation susceptibility to fluconazole and voriconazole, 2 azoles with similar molecular structure. This chain is MFS-type efflux pump MFS2, found in Trichophyton rubrum (strain ATCC MYA-4607 / CBS 118892) (Athlete's foot fungus).